Here is a 356-residue protein sequence, read N- to C-terminus: MSRLLHAEEWAEVKELGDHHRQPQPHHLPQPPPPPPPQPPATLQAREHPVYPPELSLLDSTDPRAWLAPTLQGICTARAAQYLLHSPELSASEAAAPRDEVDGRGELVRRSSGGASSSKSPGPVKVREQLCKLKGGVVVDELGCSRQRAPSSKQVNGVQKQRRLAANARERRRMHGLNHAFDQLRNVIPSFNNDKKLSKYETLQMAQIYINALSELLQTPSGGEQPPPPPASCKSDHHHLRTAASYEGGAGNATAAGAQQASGGSQRPTPPGSCRTRFSAPASAGGYSVQLDALHFSTFEDSALTAMMAQKNLSPSLPGSILQPVQEENSKTSPRSHRSDGEFSPHSHYSDSDEAS.

The segment covering 1–21 (MSRLLHAEEWAEVKELGDHHR) has biased composition (basic and acidic residues). Disordered stretches follow at residues 1–56 (MSRL…PELS) and 92–125 (SEAA…GPVK). The segment covering 26–40 (HHLPQPPPPPPPQPP) has biased composition (pro residues). Positions 96 to 109 (APRDEVDGRGELVR) are enriched in basic and acidic residues. Over residues 110–124 (RSSGGASSSKSPGPV) the composition is skewed to low complexity. Residues 161-213 (QRRLAANARERRRMHGLNHAFDQLRNVIPSFNNDKKLSKYETLQMAQIYINAL) form the bHLH domain. Disordered regions lie at residues 218–279 (QTPS…TRFS) and 314–356 (SPSL…DEAS). Residues 252–266 (NATAAGAQQASGGSQ) are compositionally biased toward low complexity. The segment covering 337-356 (HRSDGEFSPHSHYSDSDEAS) has biased composition (basic and acidic residues).

Efficient DNA binding requires dimerization with another bHLH protein.

Its subcellular location is the nucleus. Functionally, transcriptional regulator. Activates E box-dependent transcription in collaboration with TCF3/E47, but the activity is completely antagonized by the negative regulator of neurogenesis HES1. Plays a role in the differentiation of subsets of neural cells by activating E box-dependent transcription. The sequence is that of Transcription factor ATOH1 from Pan troglodytes (Chimpanzee).